We begin with the raw amino-acid sequence, 215 residues long: MTPFTQHTGLVAPLDRANVDTDQIIPKQFLKSIKRTGFGPNLFDEWRYLDIGEPGRDNSTRPLNPEFVLNFPRYQGASVLLARENFGCGSSREHAPWALDEYGFRTVIAPSFADIFYNNSFKNGLLPIVLAEAQVDALFEQCLATEGYQLTVDLAAQRVRRPDGVEYGFDIDAFRKHCLLNGLDDIGLTLQDADAIGRFEQGHRARQPWLFGALQ.

The protein belongs to the LeuD family. LeuD type 1 subfamily. In terms of assembly, heterodimer of LeuC and LeuD.

The enzyme catalyses (2R,3S)-3-isopropylmalate = (2S)-2-isopropylmalate. It functions in the pathway amino-acid biosynthesis; L-leucine biosynthesis; L-leucine from 3-methyl-2-oxobutanoate: step 2/4. Functionally, catalyzes the isomerization between 2-isopropylmalate and 3-isopropylmalate, via the formation of 2-isopropylmaleate. This Xanthomonas euvesicatoria pv. vesicatoria (strain 85-10) (Xanthomonas campestris pv. vesicatoria) protein is 3-isopropylmalate dehydratase small subunit.